Reading from the N-terminus, the 193-residue chain is Cysteine and glycine-rich protein 1 (193 aa).

One can recognise an LIM zinc-binding 1 domain in the interval 10–61; the sequence is CGVCQKTVYFAEEVQCEGNSFHKSCFLCMVCKKNLDSTTVAVHGEEIYCKSC. Residues 64-69 carry the Nuclear localization signal motif; it reads KKYGPK. A Phosphoserine modification is found at S81. K84 carries the post-translational modification N6-acetyllysine. Residue K91 forms a Glycyl lysine isopeptide (Lys-Gly) (interchain with G-Cter in SUMO2) linkage. An N6-acetyllysine mark is found at K112, K131, K137, and K161. In terms of domain architecture, LIM zinc-binding 2 spans 119-170; that stretch reads CPRCSQAVYAAEKVIGAGKSWHKSCFRCAKCGKGLESTTLADKDGEIYCKGC. Position 192 is a phosphoserine (S192).

In terms of assembly, interacts with ASCC1; ASCC2 and TRIP4.

It is found in the nucleus. In terms of biological role, could play a role in neuronal development. The chain is Cysteine and glycine-rich protein 1 (Csrp1) from Rattus norvegicus (Rat).